We begin with the raw amino-acid sequence, 756 residues long: Catalase-peroxidase (756 aa).

A cross-link (tryptophyl-tyrosyl-methioninium (Trp-Tyr) (with M-270)) is located at residues Trp-91 to Tyr-244. His-92 (proton acceptor) is an active-site residue. A disordered region spans residues Ala-198–Asn-230. Over residues Pro-214–Arg-223 the composition is skewed to basic and acidic residues. The tryptophyl-tyrosyl-methioninium (Tyr-Met) (with W-91) cross-link spans Tyr-244 to Met-270. Residue His-285 participates in heme b binding.

The protein belongs to the peroxidase family. Peroxidase/catalase subfamily. As to quaternary structure, homodimer or homotetramer. Heme b serves as cofactor. Post-translationally, formation of the three residue Trp-Tyr-Met cross-link is important for the catalase, but not the peroxidase activity of the enzyme.

The catalysed reaction is H2O2 + AH2 = A + 2 H2O. It catalyses the reaction 2 H2O2 = O2 + 2 H2O. In terms of biological role, bifunctional enzyme with both catalase and broad-spectrum peroxidase activity. The chain is Catalase-peroxidase from Pseudomonas syringae pv. syringae (strain B728a).